A 257-amino-acid polypeptide reads, in one-letter code: Indole-3-glycerol phosphate synthase (257 aa).

The protein belongs to the TrpC family.

The enzyme catalyses 1-(2-carboxyphenylamino)-1-deoxy-D-ribulose 5-phosphate + H(+) = (1S,2R)-1-C-(indol-3-yl)glycerol 3-phosphate + CO2 + H2O. It functions in the pathway amino-acid biosynthesis; L-tryptophan biosynthesis; L-tryptophan from chorismate: step 4/5. The chain is Indole-3-glycerol phosphate synthase from Phenylobacterium zucineum (strain HLK1).